The sequence spans 673 residues: Polygalacturonate 4-alpha-galacturonosyltransferase (673 aa).

Over 1 to 22 the chain is Cytoplasmic; the sequence is MALKRGLSGVNRIRGSGGGSRS. The chain crosses the membrane as a helical; Signal-anchor for type II membrane protein span at residues 23–43; it reads VLVLLIFFCVFAPLCFFVGRG. The Lumenal portion of the chain corresponds to 44–673; it reads VYIDSSNDYS…PYLRRCNLHE (630 aa). N-linked (GlcNAc...) asparagine glycosylation occurs at Asn-103. The interval 112–136 is disordered; that stretch reads GVDPSFRHSENPATPDVKSNNLNEK. N-linked (GlcNAc...) asparagine glycosylation is found at Asn-382, Asn-434, Asn-538, and Asn-585.

Belongs to the glycosyltransferase 8 family. Expressed in seedlings, inflorescences, flowers, siliques, pollen, roots, stems and leaves.

The protein localises to the golgi apparatus membrane. It catalyses the reaction [(1-&gt;4)-alpha-D-galacturonosyl](n) + UDP-alpha-D-galacturonate = [(1-&gt;4)-alpha-D-galacturonosyl](n+1) + UDP + H(+). It functions in the pathway glycan metabolism; pectin biosynthesis. In terms of biological role, involved in pectin biosynthesis. Catalyzes the transfer of galacturonic acid from uridine 5'-diphosphogalacturonic acid onto the pectic polysaccharide homogalacturonan. In Arabidopsis thaliana (Mouse-ear cress), this protein is Polygalacturonate 4-alpha-galacturonosyltransferase (GAUT1).